The primary structure comprises 102 residues: COX assembly mitochondrial protein 2 homolog (102 aa).

The CHCH domain occupies Thr11 to Arg55. Short sequence motifs (cx9C motif) lie at residues Cys14 to Cys24 and Cys37 to Cys47. 2 cysteine pairs are disulfide-bonded: Cys14-Cys47 and Cys24-Cys37.

It belongs to the CMC family.

Its subcellular location is the mitochondrion. In terms of biological role, may be involved in cytochrome c oxidase biogenesis. In Caenorhabditis elegans, this protein is COX assembly mitochondrial protein 2 homolog.